Reading from the N-terminus, the 81-residue chain is MNREGAPGKSPEEMYIQQKVRVLLMLRKMGSNLTASEEEFLRTYAGVVSSQLSQLPQHSIDQGAEDVVMAFSRSETEDRRQ.

Ser59 is subject to Phosphoserine.

Belongs to the CTNNBIP1 family. Binds CTNNB1. In terms of tissue distribution, highly expressed in heart, brain, liver and skeletal muscle. Detected at low levels in kidney, testis and lung.

The protein resides in the cytoplasm. The protein localises to the nucleus. Prevents the interaction between CTNNB1 and TCF family members, and acts as a negative regulator of the Wnt signaling pathway. The protein is Beta-catenin-interacting protein 1 (Ctnnbip1) of Mus musculus (Mouse).